The chain runs to 140 residues: MLLLKASAICGKGNEGKRNKKGGFTLIELTVVLAIMAIILMVIAPNFSYVKDSAKAKVDKQNCAAIERSVEMLLAEDAISSSVTNIKITSSNGNVQISGISDDTGKSKLQDLLEDLDKPQSGDSYNVDIENGRKVTVSIV.

Residues 1 to 23 (MLLLKASAICGKGNEGKRNKKGG) constitute a propeptide that is removed on maturation. At F24 the chain carries N-methylphenylalanine. A helical transmembrane segment spans residues 24 to 44 (FTLIELTVVLAIMAIILMVIA).

It localises to the membrane. In terms of biological role, not yet known. In Clostridium perfringens (strain 13 / Type A), this protein is Prepilin peptidase-dependent protein A (ppdA).